A 1510-amino-acid polypeptide reads, in one-letter code: ABC transporter C family MRP4 (1510 aa).

The next 12 membrane-spanning stretches (helical) occupy residues 12–32 (EAVA…LLLL), 55–75 (PAVV…AGAW), 78–98 (AVLA…SYEV), 109–129 (ALLL…LALQ), 138–158 (FPAL…VIAY), 177–197 (MVAN…GVMG), 319–339 (TFAA…SYFV), 342–362 (LSGN…FFVA), 373–393 (WYLG…AMVY), 427–447 (AWYF…LAIL), 453–473 (IAMV…VPVA), and 540–560 (FVFW…CILL). The region spanning 320–595 (FAAVNTIVSY…FPDLISMMAQ (276 aa)) is the ABC transmembrane type-1 1 domain. The ABC transporter 1 domain maps to 629 to 852 (VDIKDGAFSW…GTDFNALVSA (224 aa)). 664-671 (GVIGSGKS) contacts ATP. The disordered stretch occupies residues 889 to 925 (LKNKMCENGQPSNTRGIKEKKKKEERKKKRTVQEEER). The segment covering 906 to 918 (KEKKKKEERKKKR) has biased composition (basic residues). 6 helical membrane-spanning segments follow: residues 945-965 (GTLI…QIAS), 985-1005 (SVVL…FVFM), 1060-1082 (IAFR…AVMS), 1086-1108 (WQVL…YYIA), 1154-1174 (LLDC…WLCL), and 1179-1199 (LSTF…PGTI). The ABC transmembrane type-1 2 domain maps to 950–1220 (LIILAQTMFQ…GLNLNARMSR (271 aa)). The region spanning 1267–1501 (IELIDLKVRY…KSSMFIQLVS (235 aa)) is the ABC transporter 2 domain. Position 1301–1308 (1301–1308 (GRTGSGKS)) interacts with ATP.

This sequence belongs to the ABC transporter superfamily. ABCC family. Conjugate transporter (TC 3.A.1.208) subfamily. In terms of tissue distribution, expressed in roots, leaves, stalks, tassels, silks, developing seeds and developing embryos.

The protein resides in the membrane. ABC transporter that may affect phytic acid transport and compartmentalization. May function directly or indirectly in removing phytic acid from the cytosol or in vesicle trafficking. Required for phytic acid accumulation in developing seeds. Phytic acid is the primary storage form of phosphorus in cereal grains and other plant seeds. The sequence is that of ABC transporter C family MRP4 from Zea mays (Maize).